We begin with the raw amino-acid sequence, 681 residues long: MSGEPRKILVTSALPYANGPIHLGHLLEYIQTDIWVRFQKLRGHQCTYVCADDAHGTAIMLKAEQMGITPEQLIDQVNADHRRDFAEFLIEFDNYYSTHSEENRELSSYIYKACLDAGKIATRTITQAYDPEKNLFLADRFIKGTCPKCKAEDQYGDNCEVCSSTYTPAELINPRSAISGATPIEKESTHFFFKLPDFQEFLQKWTRSGTLQPQIANKLAEWLDAGLQEWDISRDAPYFGFEIPDQPGKFFYVWLDAPIGYMASFKNLCARRADLDFDEYWKKDSTAELYHFIGKDIINFHALFWPSMLSCADFRTPSAVYAHGFVTVDGAKMSKSRGTFIMARTYLEHLNPEYLRYYFAAKLTSNVDDLDLNLQDFTLKVNADLVGKLVNIASRCAKFITKAGGKLSPQISEPELIEQFLSKSDFIAQAYEDREFGKAVREIMALADLANKYIDEKAPWKLAKEEGKEQEVLDVCSVGVNLFRILITYLAPVLPGVAAASAEFLNAPIVWNRPLEPLTDHAVNEFKPMISRVDPKAVDAMVDASKDNMAQAPKDNGKAKKDKKEAKSEEEIAPTIKFDDFAKIDLRIAKIVSAEHVEGADKLLRLQLDIGSEQRQVFAGIKSAYAPEDLVGRLTVMVANLEPRKMKFGMSEGMVLAAGPGGKDIWLLQPDSGAQPGMQVK.

Residues 15–25 (PYANGPIHLGH) carry the 'HIGH' region motif. Zn(2+) contacts are provided by Cys146, Cys149, Cys159, and Cys162. Residues 332-336 (KMSKS) carry the 'KMSKS' region motif. An ATP-binding site is contributed by Lys335. A disordered region spans residues 547–569 (DNMAQAPKDNGKAKKDKKEAKSE). Residues 555 to 569 (DNGKAKKDKKEAKSE) show a composition bias toward basic and acidic residues. The region spanning 580–681 (DFAKIDLRIA…SGAQPGMQVK (102 aa)) is the tRNA-binding domain.

This sequence belongs to the class-I aminoacyl-tRNA synthetase family. MetG type 1 subfamily. As to quaternary structure, homodimer. Zn(2+) is required as a cofactor.

The protein resides in the cytoplasm. It carries out the reaction tRNA(Met) + L-methionine + ATP = L-methionyl-tRNA(Met) + AMP + diphosphate. In terms of biological role, is required not only for elongation of protein synthesis but also for the initiation of all mRNA translation through initiator tRNA(fMet) aminoacylation. In Hahella chejuensis (strain KCTC 2396), this protein is Methionine--tRNA ligase.